The primary structure comprises 302 residues: Diacetylchitobiose uptake system permease protein NgcG (302 aa).

6 helical membrane passes run 40 to 60, 99 to 119, 131 to 151, 166 to 186, 221 to 241, and 268 to 288; these read LLILWSVIVIVPMLWVLMSSF, VIVVVSALILVMLLGAMCAYV, IYYVMLAGLTFPVFLAIVPLF, LILTYVAFALPFTMFFLYSFF, AAVAIFNFLGLWNQFLLPVAL, and GALFAAIVVTVVPVLLVYCVF. The region spanning 95–288 is the ABC transmembrane type-1 domain; it reads FLNSVIVVVS…VPVLLVYCVF (194 aa).

It belongs to the binding-protein-dependent transport system permease family. The complex is composed of two ATP-binding proteins (MsiK), two transmembrane proteins (NgcF and NgcG) and a solute-binding protein (NgcE).

It is found in the cell membrane. In terms of biological role, part of the ABC transporter complex NgcEFG-MsiK involved in N,N'-diacetylchitobiose ((GlcNAc)2) uptake. Responsible for the translocation of the substrate across the membrane. This is Diacetylchitobiose uptake system permease protein NgcG from Streptomyces coelicolor (strain ATCC BAA-471 / A3(2) / M145).